A 413-amino-acid polypeptide reads, in one-letter code: Arginine biosynthesis bifunctional protein ArgJ (413 aa).

Substrate-binding residues include Thr160, Lys186, Thr197, Glu284, Asn408, and Ser413. Thr197 acts as the Nucleophile in catalysis.

The protein belongs to the ArgJ family. Heterotetramer of two alpha and two beta chains.

The protein localises to the cytoplasm. It catalyses the reaction N(2)-acetyl-L-ornithine + L-glutamate = N-acetyl-L-glutamate + L-ornithine. The enzyme catalyses L-glutamate + acetyl-CoA = N-acetyl-L-glutamate + CoA + H(+). It participates in amino-acid biosynthesis; L-arginine biosynthesis; L-ornithine and N-acetyl-L-glutamate from L-glutamate and N(2)-acetyl-L-ornithine (cyclic): step 1/1. The protein operates within amino-acid biosynthesis; L-arginine biosynthesis; N(2)-acetyl-L-ornithine from L-glutamate: step 1/4. Its function is as follows. Catalyzes two activities which are involved in the cyclic version of arginine biosynthesis: the synthesis of N-acetylglutamate from glutamate and acetyl-CoA as the acetyl donor, and of ornithine by transacetylation between N(2)-acetylornithine and glutamate. The sequence is that of Arginine biosynthesis bifunctional protein ArgJ from Burkholderia pseudomallei (strain K96243).